The sequence spans 1978 residues: Protein MOR1 (1978 aa).

HEAT repeat units lie at residues 48 to 86 (DPRLRDFGHLFRKTVADSNAPVQEKALDALIAFLRAADS) and 165 to 202 (IPPKRILKMLPELFDHQDQNVRASAKGVTLELCRWIGK). Residues 230 to 264 (AGAKPTRKIRSEQDKEPEAEASSDVVGDGPSEEAV) are disordered. Residues 238-247 (IRSEQDKEPE) are compositionally biased toward basic and acidic residues. HEAT repeat units lie at residues 322–359 (GDFSEICRTLKKLITDVNLAVAVEAIQAIGNLACGLRT), 363–400 (ASSRFMLPVLLEKLKEKKQSVTDPLTQTLQTMYKAGCL), and 442–479 (KAHKEYVPLCMECLNDGTPDVRDAAFSALAAIAKSVGM). The interval 501 to 587 (IAGSGGGDQA…SVEPPEDVEP (87 aa)) is disordered. Positions 510 to 527 (AGTSSVTVQSSVGSTATG) are enriched in low complexity. Over residues 565 to 577 (GKKDGSVRNEGSK) the composition is skewed to basic and acidic residues. 4 HEAT repeats span residues 849–886 (DISTKITPNLLKGFESPDWKMRLESIEAVNKILEEANK), 890–928 (PTGTGELFGGLRGRLLDSNKNLVMQTLTTIGGVAAAMGP), 932–969 (KASKGILSDVLKCLGDNKKHMRECTLAALDLWLGAVHL), and 1008–1045 (VDAIHLLKPASTAMTDKSADVRKAAEGCISEILRVSGQ). The tract at residues 1087–1115 (SKGVTKISKSTSNGTLKQGNRSRAVPTKG) is disordered. The segment covering 1093–1107 (ISKSTSNGTLKQGNR) has biased composition (polar residues). HEAT repeat units lie at residues 1230 to 1253 (LKVLEFLPELFNTLRDEEYCMTEA), 1254 to 1286 (EAAIFLPCLAEKLGHNIEKVREKMRELMKQIIQ), 1287 to 1325 (AYSVGKTYPYILEGLRSKNNRTRIECTDLIGYLLETCGT), and 1328 to 1365 (GGLLKYLNIVASLTAERDGELRKAALNTMATGYQILGA). Basic and acidic residues predominate over residues 1393–1403 (MEKRREGKPGE). A disordered region spans residues 1393–1431 (MEKRREGKPGEARAALRRSVRDSGPEVAEQSGDISQTVP). The HEAT 14 repeat unit spans residues 1535–1575 (RSCKYVLNTLMQTFQNKKLAHAVKEGTLESLITELLLWLLD). The disordered stretch occupies residues 1837-1862 (AAAGRTPSSLPLSTPPPSSLALPSPD).

Belongs to the TOG/XMAP215 family. As to expression, expressed in roots, cotyledons, rosette leaves, stems, open flowers and green siliques.

The protein resides in the cytoplasm. It is found in the cytoskeleton. Its subcellular location is the phragmoplast. It localises to the spindle. In terms of biological role, microtubule-binding protein that is essential for cortical microtubules organization and function. Essential for maintaining the interphase cortical array and for correct morphogenesis. Promotes rapid growth and shrinkage of microtubules and suppresses the pausing of interphase microtubules. Regulates the structure and function of microtubule arrays during mitosis and cytokinesis. Probably not required for cellulose microfibrils alignment in roots. The chain is Protein MOR1 (MOR1) from Arabidopsis thaliana (Mouse-ear cress).